The primary structure comprises 348 residues: MAVTLGKNNMNIRQAIARVVTGADLSESEMMASMEEVMSGQASPAQIASFITALRMKGEAVEEIVGAVRVMRDKATFIDCGLGPDDILMDIVGTGGDGADTFNVSTTTSFVVAAAGVAVAKHGNRAVSSRCGSADVLEALGVDLSLDPATVARSVQEIGIGFLFAPLLHAAMKHAIVPRREMGIRTIFNILGPLTNPAGANVQLIGVFERSLTTVLAEVLLRLGERRSLVVWGEGNMDEMTVTGTSYIADAHDGRVTSYAVEPEDVGLARAAVADISGGRTPEESAQQVRAVLAGEKGARLDMVLLNAGAALLAAGRVETIVEGVVMARDVVESGAALKKLGQLVAFR.

5-phospho-alpha-D-ribose 1-diphosphate-binding positions include G93, 96–97 (GD), T101, 103–106 (NVST), 121–129 (KHGNRAVSS), and S133. G93 contributes to the anthranilate binding site. S105 is a Mg(2+) binding site. Anthranilate is bound at residue N124. An anthranilate-binding site is contributed by R179. Mg(2+) is bound by residues D238 and E239.

This sequence belongs to the anthranilate phosphoribosyltransferase family. In terms of assembly, homodimer. Mg(2+) serves as cofactor.

It carries out the reaction N-(5-phospho-beta-D-ribosyl)anthranilate + diphosphate = 5-phospho-alpha-D-ribose 1-diphosphate + anthranilate. The protein operates within amino-acid biosynthesis; L-tryptophan biosynthesis; L-tryptophan from chorismate: step 2/5. Functionally, catalyzes the transfer of the phosphoribosyl group of 5-phosphorylribose-1-pyrophosphate (PRPP) to anthranilate to yield N-(5'-phosphoribosyl)-anthranilate (PRA). In Desulfotalea psychrophila (strain LSv54 / DSM 12343), this protein is Anthranilate phosphoribosyltransferase.